The chain runs to 391 residues: 3-ketoacyl-CoA thiolase (391 aa).

Cys-95 functions as the Acyl-thioester intermediate in the catalytic mechanism. Residues His-347 and Cys-377 each act as proton acceptor in the active site.

Belongs to the thiolase-like superfamily. Thiolase family. Heterotetramer of two alpha chains (FadB) and two beta chains (FadA).

The protein localises to the cytoplasm. The catalysed reaction is an acyl-CoA + acetyl-CoA = a 3-oxoacyl-CoA + CoA. It participates in lipid metabolism; fatty acid beta-oxidation. Functionally, catalyzes the final step of fatty acid oxidation in which acetyl-CoA is released and the CoA ester of a fatty acid two carbons shorter is formed. The protein is 3-ketoacyl-CoA thiolase of Pseudomonas savastanoi pv. phaseolicola (strain 1448A / Race 6) (Pseudomonas syringae pv. phaseolicola (strain 1448A / Race 6)).